A 784-amino-acid chain; its full sequence is ATP-dependent zinc metalloprotease FTSH 9, chloroplastic/mitochondrial (784 aa).

3 stretches are compositionally biased toward low complexity: residues 1–12 (MSALQASLLLRP), 24–34 (PLPSSSASFPR), and 42–53 (PLPLRALASEGP). The N-terminal 47 residues, 1–47 (MSALQASLLLRPLPSPLPPRRRLPLPSSSASFPRAGHHRRLPLPLRA), are a transit peptide targeting the chloroplast and mitochondrion. The interval 1-71 (MSALQASLLL…DPPPPELPAA (71 aa)) is disordered. Positions 54 to 69 (QPAPSPAPDPPPPELP) are enriched in pro residues. 2 consecutive transmembrane segments (helical) span residues 104-124 (WVLALAAAVVAAARRFFDWVV) and 267-287 (IFSTVLFTIAVGLMWVMGAAA). 368–375 (GSPGTGKT) contacts ATP. Histidine 601 provides a ligand contact to Zn(2+). Glutamate 602 is a catalytic residue. The Zn(2+) site is built by histidine 605 and aspartate 679.

The protein in the N-terminal section; belongs to the AAA ATPase family. In the C-terminal section; belongs to the peptidase M41 family. Zn(2+) is required as a cofactor.

Its subcellular location is the mitochondrion membrane. The protein resides in the plastid. The protein localises to the chloroplast thylakoid membrane. Its function is as follows. Probable ATP-dependent zinc metallopeptidase. This Oryza sativa subsp. japonica (Rice) protein is ATP-dependent zinc metalloprotease FTSH 9, chloroplastic/mitochondrial (FTSH9).